Consider the following 240-residue polypeptide: Arylmalonate decarboxylase (240 aa).

It carries out the reaction 2-aryl-2-methylmalonate + H(+) = 2-arylpropionate + CO2. The sequence is that of Arylmalonate decarboxylase from Bordetella bronchiseptica (Alcaligenes bronchisepticus).